A 142-amino-acid chain; its full sequence is Putative pre-16S rRNA nuclease (142 aa).

Belongs to the YqgF nuclease family.

It is found in the cytoplasm. Functionally, could be a nuclease involved in processing of the 5'-end of pre-16S rRNA. This is Putative pre-16S rRNA nuclease from Staphylococcus saprophyticus subsp. saprophyticus (strain ATCC 15305 / DSM 20229 / NCIMB 8711 / NCTC 7292 / S-41).